The following is a 459-amino-acid chain: MQARALLPATLAILATLAVLALAREPPAAPCPARCDVSRCPSPRCPGGYVPDLCNCCLVCAASEGEPCGRPLDSPCGDSLECVRGVCRCRWTHTVCGTDGHTYADVCALQAASRRALQVSGTPVRQLQKGACPSGLHQLTSPRYKFNFIADVVEKIAPAVVHIELFLRHPLFGRNVPLSSGSGFIMSEAGLIVTNAHVVSSSSTASGRQQLKVQLQNGDAYEATIQDIDKKSDIATIVIHPKKKLPVLLLGHSADLRPGEFVVAIGSPFALQNTVTTGIVSTAQRDGKELGLRDSDMDYIQTDAIINYGNSGGPLVNLDGEVIGINTLKVAAGISFAIPSDRITRFLSEFQNKHVKDWKKRFIGIRMRTITPSLVEELKAANPDFPAVSSGIYVQEVVPNSPSQRGGIQDGDIIVKVNGRPLADSSELQEAVLNESSLLLEVRRGNDDLLFSIIPEVVM.

An N-terminal signal peptide occupies residues 1-23 (MQARALLPATLAILATLAVLALA). In terms of domain architecture, IGFBP N-terminal spans 27–90 (PAAPCPARCD…ECVRGVCRCR (64 aa)). 8 disulfides stabilise this stretch: cysteine 31/cysteine 54, cysteine 35/cysteine 56, cysteine 40/cysteine 57, cysteine 45/cysteine 60, cysteine 68/cysteine 82, cysteine 76/cysteine 87, cysteine 89/cysteine 107, and cysteine 96/cysteine 132. One can recognise a Kazal-like domain in the interval 76–134 (CGDSLECVRGVCRCRWTHTVCGTDGHTYADVCALQAASRRALQVSGTPVRQLQKGACPS). Residues 181 to 347 (GSGFIMSEAG…IPSDRITRFL (167 aa)) are serine protease. Catalysis depends on charge relay system residues histidine 197, aspartate 233, and serine 311. The region spanning 365-450 (IRMRTITPSL…EVRRGNDDLL (86 aa)) is the PDZ domain.

The protein belongs to the peptidase S1C family. As to quaternary structure, homotrimer. Interacts with MYH9. Interacts with TGFB1; the interaction inhibits TGFB-mediated signaling. Interacts with BMP4; the interaction inhibits BMP4-mediated signaling. Interacts with TGFB2 and GDF5. Highest level of isoform 1 in maternal part of the placenta, moderate level in heart, testis and ovary, low level in muscle and lung. High expression found in granulosa cells of the ovary. Expressed in bone matrix, particularly in articular chondrocytes. Very low level of isoform 2 expressed in placenta. Expressed in the bone matrix, particularly in articular chondrocytes.

The protein resides in the secreted. Functionally, serine protease that cleaves beta-casein/CSN2 as well as several extracellular matrix (ECM) proteoglycans such as decorin/DCN, biglycan/BGN and fibronectin/FN1. Inhibits signaling mediated by TGF-beta family proteins possibly indirectly by degradation of these ECM proteoglycans. May act as a tumor suppressor. Negatively regulates, in vitro, trophoblast invasion during placental development and may be involved in the development of the placenta in vivo. May also have a role in ovarian development, granulosa cell differentiation and luteinization. This chain is Serine protease HTRA3 (Htra3), found in Mus musculus (Mouse).